The following is a 310-amino-acid chain: MTAKIFIDGEHGTTGLQIRSRMADRRDVELLSIPQEQRRNAALREDLLNSADIAILCLPDDASKEAVSMLAGNNNVRIIDTSTAFRVAQDWTYGFAEMDKAQGDKIRSARCVANPGCYPTGAIALIRPLRAAGILPDGYPVSVNAVSGYSGGGKQLIAQMEDESHPEHLTVNNYVYGLNLKHKHVPEMKAHGLLDRAPLFSPSVGRFPQGMIVQVPLFLEDLADGATVESIHAALSAHYAGQDIVKVVALEDSAKLGRVDAEELVGQDTMKLFAFGNPGTGHVNLVAVLDNLGKGASGAAVQNMDLMLSA.

Cysteine 117 is a catalytic residue.

Belongs to the NAGSA dehydrogenase family. Type 2 subfamily.

It localises to the cytoplasm. The enzyme catalyses N-acetyl-L-glutamate 5-semialdehyde + phosphate + NADP(+) = N-acetyl-L-glutamyl 5-phosphate + NADPH + H(+). It functions in the pathway amino-acid biosynthesis; L-arginine biosynthesis; N(2)-acetyl-L-ornithine from L-glutamate: step 3/4. Functionally, catalyzes the NADPH-dependent reduction of N-acetyl-5-glutamyl phosphate to yield N-acetyl-L-glutamate 5-semialdehyde. This is N-acetyl-gamma-glutamyl-phosphate reductase from Allorhizobium ampelinum (strain ATCC BAA-846 / DSM 112012 / S4) (Agrobacterium vitis (strain S4)).